The chain runs to 521 residues: Glucose-1-phosphate adenylyltransferase large subunit 2, chloroplastic/amyloplastic (521 aa).

The N-terminal 47 residues, 1–47, are a transit peptide targeting the chloroplast; that stretch reads MQFSSVLPLEGKACMSPVRRGSGGYGSERMRINCCSIRRNKALRRMC.

This sequence belongs to the bacterial/plant glucose-1-phosphate adenylyltransferase family. In terms of assembly, heterotetramer. In terms of tissue distribution, abundant in the embryo and is also present in the endosperm.

Its subcellular location is the plastid. It localises to the chloroplast. The protein resides in the amyloplast. The catalysed reaction is alpha-D-glucose 1-phosphate + ATP + H(+) = ADP-alpha-D-glucose + diphosphate. Its pathway is glycan biosynthesis; starch biosynthesis. With respect to regulation, activated by 3'phosphoglycerate, inhibited by orthophosphate. Allosteric regulation. In terms of biological role, this protein plays a role in synthesis of starch. It catalyzes the synthesis of the activated glycosyl donor, ADP-glucose from Glc-1-P and ATP. The sequence is that of Glucose-1-phosphate adenylyltransferase large subunit 2, chloroplastic/amyloplastic (AGP2) from Zea mays (Maize).